We begin with the raw amino-acid sequence, 75 residues long: Putative sulfur carrier protein MJ0990 (75 aa).

Residue C15 is the Cysteine persulfide intermediate of the active site.

It belongs to the sulfur carrier protein TusA family.

The protein is Putative sulfur carrier protein MJ0990 of Methanocaldococcus jannaschii (strain ATCC 43067 / DSM 2661 / JAL-1 / JCM 10045 / NBRC 100440) (Methanococcus jannaschii).